The following is a 182-amino-acid chain: Endoribonuclease YbeY (182 aa).

Residues His-115, His-119, and His-125 each coordinate Zn(2+).

It belongs to the endoribonuclease YbeY family. Requires Zn(2+) as cofactor.

It is found in the cytoplasm. Functionally, single strand-specific metallo-endoribonuclease involved in late-stage 70S ribosome quality control and in maturation of the 3' terminus of the 16S rRNA. The sequence is that of Endoribonuclease YbeY from Bifidobacterium longum subsp. infantis (strain ATCC 15697 / DSM 20088 / JCM 1222 / NCTC 11817 / S12).